A 341-amino-acid polypeptide reads, in one-letter code: Phenylalanine--tRNA ligase alpha subunit (341 aa).

Residue E254 coordinates Mg(2+).

It belongs to the class-II aminoacyl-tRNA synthetase family. Phe-tRNA synthetase alpha subunit type 1 subfamily. In terms of assembly, tetramer of two alpha and two beta subunits. Mg(2+) is required as a cofactor.

The protein resides in the cytoplasm. The enzyme catalyses tRNA(Phe) + L-phenylalanine + ATP = L-phenylalanyl-tRNA(Phe) + AMP + diphosphate + H(+). In Mycoplasma genitalium (strain ATCC 33530 / DSM 19775 / NCTC 10195 / G37) (Mycoplasmoides genitalium), this protein is Phenylalanine--tRNA ligase alpha subunit (pheS).